Here is a 542-residue protein sequence, read N- to C-terminus: Chaperonin GroEL 2 (542 aa).

ATP-binding positions include 30–33 (TLGP), Lys51, 87–91 (DGTTT), Gly415, and Asp496.

Belongs to the chaperonin (HSP60) family. In terms of assembly, forms a cylinder of 14 subunits composed of two heptameric rings stacked back-to-back. Interacts with the co-chaperonin GroES.

It is found in the cytoplasm. The enzyme catalyses ATP + H2O + a folded polypeptide = ADP + phosphate + an unfolded polypeptide.. Functionally, together with its co-chaperonin GroES, plays an essential role in assisting protein folding. The GroEL-GroES system forms a nano-cage that allows encapsulation of the non-native substrate proteins and provides a physical environment optimized to promote and accelerate protein folding. The polypeptide is Chaperonin GroEL 2 (Sinorhizobium fredii (strain NBRC 101917 / NGR234)).